Reading from the N-terminus, the 458-residue chain is Dihydrolipoyl dehydrogenase (458 aa).

Residues Asp-30–Cys-38, Lys-47, and Ala-112 each bind FAD. Cys-38 and Cys-43 are disulfide-bonded. Residues Gly-177–Ile-181, Glu-200, and Ala-263–Arg-266 contribute to the NAD(+) site. FAD-binding residues include Asp-305 and Ala-313. The active-site Proton acceptor is the His-437.

This sequence belongs to the class-I pyridine nucleotide-disulfide oxidoreductase family. In terms of assembly, homodimer. FAD is required as a cofactor.

Its subcellular location is the cytoplasm. It catalyses the reaction N(6)-[(R)-dihydrolipoyl]-L-lysyl-[protein] + NAD(+) = N(6)-[(R)-lipoyl]-L-lysyl-[protein] + NADH + H(+). Its pathway is ketone degradation; acetoin degradation. The sequence is that of Dihydrolipoyl dehydrogenase (acoL) from Bacillus subtilis (strain 168).